Consider the following 535-residue polypeptide: NEDD8-activating enzyme E1 regulatory subunit (535 aa).

Residues 332-345 are interaction with UBA3; sequence DMIADSSKFIKLQN.

Belongs to the ubiquitin-activating E1 family. ULA1 subfamily. As to quaternary structure, heterodimer of UBA3 and NAE1. The complex binds NEDD8 and UBE2M.

It participates in protein modification; protein neddylation. In terms of biological role, regulatory subunit of the dimeric UBA3-NAE1 E1 enzyme. E1 activates NEDD8 by first adenylating its C-terminal glycine residue with ATP, thereafter linking this residue to the side chain of the catalytic cysteine, yielding a NEDD8-UBA3 thioester and free AMP. E1 finally transfers NEDD8 to the catalytic cysteine of UBE2M. The covalent attachment of NEDD8 to target proteins is known as 'neddylation' and the process is involved in the regulation of cell growth, viability and development. This is NEDD8-activating enzyme E1 regulatory subunit (NAE1) from Gallus gallus (Chicken).